We begin with the raw amino-acid sequence, 346 residues long: Phosphoribosylformylglycinamidine cyclo-ligase (346 aa).

This sequence belongs to the AIR synthase family.

The protein resides in the cytoplasm. It catalyses the reaction 2-formamido-N(1)-(5-O-phospho-beta-D-ribosyl)acetamidine + ATP = 5-amino-1-(5-phospho-beta-D-ribosyl)imidazole + ADP + phosphate + H(+). Its pathway is purine metabolism; IMP biosynthesis via de novo pathway; 5-amino-1-(5-phospho-D-ribosyl)imidazole from N(2)-formyl-N(1)-(5-phospho-D-ribosyl)glycinamide: step 2/2. The sequence is that of Phosphoribosylformylglycinamidine cyclo-ligase from Colwellia psychrerythraea (strain 34H / ATCC BAA-681) (Vibrio psychroerythus).